The sequence spans 65 residues: Large ribosomal subunit protein uL29 (65 aa).

This sequence belongs to the universal ribosomal protein uL29 family.

The chain is Large ribosomal subunit protein uL29 from Leptothrix cholodnii (strain ATCC 51168 / LMG 8142 / SP-6) (Leptothrix discophora (strain SP-6)).